The primary structure comprises 214 residues: Pyridoxine/pyridoxamine 5'-phosphate oxidase (214 aa).

Substrate contacts are provided by residues 8 to 11 and Lys-67; that span reads RKSY. FMN contacts are provided by residues 62–67, 77–78, Lys-84, and Gln-106; these read RVVLLK and YT. Substrate is bound by residues Tyr-124, Arg-128, and Ser-132. Residues 141 to 142 and Trp-186 contribute to the FMN site; that span reads QS. 192–194 is a binding site for substrate; sequence RLH. Residue Arg-196 coordinates FMN.

It belongs to the pyridoxamine 5'-phosphate oxidase family. Homodimer. FMN serves as cofactor.

It catalyses the reaction pyridoxamine 5'-phosphate + O2 + H2O = pyridoxal 5'-phosphate + H2O2 + NH4(+). The catalysed reaction is pyridoxine 5'-phosphate + O2 = pyridoxal 5'-phosphate + H2O2. The protein operates within cofactor metabolism; pyridoxal 5'-phosphate salvage; pyridoxal 5'-phosphate from pyridoxamine 5'-phosphate: step 1/1. It functions in the pathway cofactor metabolism; pyridoxal 5'-phosphate salvage; pyridoxal 5'-phosphate from pyridoxine 5'-phosphate: step 1/1. Its function is as follows. Catalyzes the oxidation of either pyridoxine 5'-phosphate (PNP) or pyridoxamine 5'-phosphate (PMP) into pyridoxal 5'-phosphate (PLP). The protein is Pyridoxine/pyridoxamine 5'-phosphate oxidase of Flavobacterium johnsoniae (strain ATCC 17061 / DSM 2064 / JCM 8514 / BCRC 14874 / CCUG 350202 / NBRC 14942 / NCIMB 11054 / UW101) (Cytophaga johnsonae).